Consider the following 576-residue polypeptide: K(+)/H(+) antiporter NhaP2 (576 aa).

The next 13 membrane-spanning stretches (helical) occupy residues 6–26, 34–54, 58–78, 87–107, 109–129, 163–183, 185–205, 219–239, 242–262, 271–291, 299–319, 335–355, and 359–379; these read INSFFLIGALLTAVSVLLSPM, ILLIFLAVGILAGEDGPGGIL, YSTAYLVSNLALAIILLDGGM, VALWPALSLATFGVAITTSIT, MMAAWLFDLHWLQGLLVGAIV, PMAVFLTVTLIAILANVDTEM, FSFMFISFIKQFGLGICLGLG, LADGLYSILVLSGGLIIYAAS, LGGSGILSIYLVGLFLGNKPT, VLDGMTWVSQIGMFLVLGLLL, ILIPGFALAFGMILFARPVAV, WFISWVGLRGAVPIILAVFPM, and LPGAQLYFNLAFFVVLVSLLV. An RCK C-terminal domain is found at 405–486; it reads SGVEIYPSSE…LEALSNLFSQ (82 aa).

The protein belongs to the monovalent cation:proton antiporter 1 (CPA1) transporter (TC 2.A.36) family. NhaP2 subfamily.

The protein resides in the cell inner membrane. The enzyme catalyses K(+)(in) + H(+)(out) = K(+)(out) + H(+)(in). In terms of biological role, k(+)/H(+) antiporter that extrudes potassium in exchange for external protons and maintains the internal concentration of potassium under toxic levels. The sequence is that of K(+)/H(+) antiporter NhaP2 from Shewanella baltica (strain OS195).